We begin with the raw amino-acid sequence, 360 residues long: Phenylalanine--tRNA ligase alpha subunit (360 aa).

Glutamate 260 serves as a coordination point for Mg(2+).

This sequence belongs to the class-II aminoacyl-tRNA synthetase family. Phe-tRNA synthetase alpha subunit type 1 subfamily. In terms of assembly, tetramer of two alpha and two beta subunits. Mg(2+) serves as cofactor.

The protein localises to the cytoplasm. It carries out the reaction tRNA(Phe) + L-phenylalanine + ATP = L-phenylalanyl-tRNA(Phe) + AMP + diphosphate + H(+). The polypeptide is Phenylalanine--tRNA ligase alpha subunit (Agrobacterium fabrum (strain C58 / ATCC 33970) (Agrobacterium tumefaciens (strain C58))).